The chain runs to 413 residues: Aspartate aminotransferase, cytoplasmic (413 aa).

Positions 39 and 141 each coordinate L-aspartate. The residue at position 149 (Ser-149) is a Phosphoserine. Asn-195 lines the L-aspartate pocket. At Lys-259 the chain carries N6-(pyridoxal phosphate)lysine. Arg-387 contributes to the L-aspartate binding site.

Belongs to the class-I pyridoxal-phosphate-dependent aminotransferase family. As to quaternary structure, homodimer. It depends on pyridoxal 5'-phosphate as a cofactor.

Its subcellular location is the cytoplasm. The catalysed reaction is L-aspartate + 2-oxoglutarate = oxaloacetate + L-glutamate. The enzyme catalyses L-cysteine + 2-oxoglutarate = 2-oxo-3-sulfanylpropanoate + L-glutamate. It catalyses the reaction (2S)-2-aminobutanoate + 2-oxoglutarate = 2-oxobutanoate + L-glutamate. It carries out the reaction 3-sulfino-L-alanine + 2-oxoglutarate = 3-sulfinopyruvate + L-glutamate. Its function is as follows. Biosynthesis of L-glutamate from L-aspartate or L-cysteine. Important regulator of levels of glutamate, the major excitatory neurotransmitter of the vertebrate central nervous system. Acts as a scavenger of glutamate in brain neuroprotection. The aspartate aminotransferase activity is involved in hepatic glucose synthesis during development and in adipocyte glyceroneogenesis. Using L-cysteine as substrate, regulates levels of mercaptopyruvate, an important source of hydrogen sulfide. Mercaptopyruvate is converted into H(2)S via the action of 3-mercaptopyruvate sulfurtransferase (3MST). Hydrogen sulfide is an important synaptic modulator and neuroprotectant in the brain. This is Aspartate aminotransferase, cytoplasmic from Pongo abelii (Sumatran orangutan).